We begin with the raw amino-acid sequence, 667 residues long: Sorting nexin mvp1 (667 aa).

The tract at residues 221–268 (AGNLHSQQPPKFSVDSSVDDNAITPRKPFSKIPNRLSPSTQPLLSNSR) is disordered. Over residues 224-236 (LHSQQPPKFSVDS) the composition is skewed to polar residues. The region spanning 279–398 (TSFPASLEMN…RVFFTEPNVF (120 aa)) is the PX domain. Residues Arg-320, Ser-322, and Lys-346 each coordinate a 1,2-diacyl-sn-glycero-3-phospho-(1D-myo-inositol-3-phosphate). Positions 574-594 (ANSDESGRNRTFLNRSSKKRA) are disordered.

The protein belongs to the sorting nexin family. As to quaternary structure, homodimer. Forms an autoinhibited tetramer consisting of 2 homodimers that self-interact, wherein the membrane-interacting BAR surfaces are sequestered and the PX lipid-binding sites are occluded. Interacts with Vps1.

The protein resides in the cytoplasm. The protein localises to the endosome membrane. Its function is as follows. Required for vacuolar protein sorting. Component of the retromer-mediated endosome-to-Golgi retrograde pathway. Required for efficient cargo export from the endosome, promoting Vps1-mediated fission of retromer-coated tubules that bud from the endosome. The chain is Sorting nexin mvp1 (mvp1) from Schizosaccharomyces pombe (strain 972 / ATCC 24843) (Fission yeast).